The sequence spans 367 residues: Indole glucosinolate O-methyltransferase 5 (367 aa).

The S-adenosyl-L-homocysteine site is built by Gly-209, Asp-232, Asp-252, Met-253, and Lys-266. The active-site Proton acceptor is His-270.

It belongs to the class I-like SAM-binding methyltransferase superfamily. Cation-independent O-methyltransferase family.

The protein operates within secondary metabolite biosynthesis. Its function is as follows. Involved in indole glucosinolate biosynthesis. Catalyzes methoxylation reactions of the glucosinolate indole ring. Converts the hydroxy intermediates 4-hydroxy-indol-3-yl-methylglucosinolate (4OH-I3M) and 1-hydroxy-indol-3-yl-methylglucosinolate (1OH-I3M) to 4-methoxy-indol-3-yl-methylglucosinolate (4MO-I3M) and 1-methoxy-indol-3-yl-methylglucosinolate, respectively. The sequence is that of Indole glucosinolate O-methyltransferase 5 from Arabidopsis thaliana (Mouse-ear cress).